Consider the following 654-residue polypeptide: tRNA 5-methylaminomethyl-2-thiouridine biosynthesis bifunctional protein MnmC (654 aa).

The interval 1 to 236 is tRNA (mnm(5)s(2)U34)-methyltransferase; the sequence is MPTLLQHAQI…KWEVMSGAYV (236 aa). The tract at residues 262–654 is FAD-dependent cmnm(5)s(2)U34 oxidoreductase; it reads IGAGLAGSSS…FGLRRLIRGK (393 aa).

It in the N-terminal section; belongs to the methyltransferase superfamily. tRNA (mnm(5)s(2)U34)-methyltransferase family. This sequence in the C-terminal section; belongs to the DAO family. Requires FAD as cofactor.

It localises to the cytoplasm. The catalysed reaction is 5-aminomethyl-2-thiouridine(34) in tRNA + S-adenosyl-L-methionine = 5-methylaminomethyl-2-thiouridine(34) in tRNA + S-adenosyl-L-homocysteine + H(+). Its function is as follows. Catalyzes the last two steps in the biosynthesis of 5-methylaminomethyl-2-thiouridine (mnm(5)s(2)U) at the wobble position (U34) in tRNA. Catalyzes the FAD-dependent demodification of cmnm(5)s(2)U34 to nm(5)s(2)U34, followed by the transfer of a methyl group from S-adenosyl-L-methionine to nm(5)s(2)U34, to form mnm(5)s(2)U34. This Pseudomonas putida (strain ATCC 700007 / DSM 6899 / JCM 31910 / BCRC 17059 / LMG 24140 / F1) protein is tRNA 5-methylaminomethyl-2-thiouridine biosynthesis bifunctional protein MnmC.